A 654-amino-acid chain; its full sequence is Probable Xaa-Pro aminopeptidase P (654 aa).

Positions 449, 460, 558, and 572 each coordinate Mn(2+).

This sequence belongs to the peptidase M24B family. Mn(2+) serves as cofactor.

The catalysed reaction is Release of any N-terminal amino acid, including proline, that is linked to proline, even from a dipeptide or tripeptide.. Catalyzes the removal of a penultimate prolyl residue from the N-termini of peptides. The polypeptide is Probable Xaa-Pro aminopeptidase P (ampp) (Aspergillus flavus (strain ATCC 200026 / FGSC A1120 / IAM 13836 / NRRL 3357 / JCM 12722 / SRRC 167)).